Consider the following 335-residue polypeptide: Tetraacyldisaccharide 4'-kinase (335 aa).

Position 58–65 (58–65) interacts with ATP; that stretch reads TVGGSGKT.

The protein belongs to the LpxK family.

The enzyme catalyses a lipid A disaccharide + ATP = a lipid IVA + ADP + H(+). Its pathway is glycolipid biosynthesis; lipid IV(A) biosynthesis; lipid IV(A) from (3R)-3-hydroxytetradecanoyl-[acyl-carrier-protein] and UDP-N-acetyl-alpha-D-glucosamine: step 6/6. Functionally, transfers the gamma-phosphate of ATP to the 4'-position of a tetraacyldisaccharide 1-phosphate intermediate (termed DS-1-P) to form tetraacyldisaccharide 1,4'-bis-phosphate (lipid IVA). The sequence is that of Tetraacyldisaccharide 4'-kinase from Shewanella oneidensis (strain ATCC 700550 / JCM 31522 / CIP 106686 / LMG 19005 / NCIMB 14063 / MR-1).